The primary structure comprises 283 residues: Orotidine 5'-phosphate decarboxylase (283 aa).

Residues Asp40, 62–64 (KTH), 93–102 (DRKFADIGNT), Tyr220, and Arg239 contribute to the substrate site. Lys95 serves as the catalytic Proton donor.

Belongs to the OMP decarboxylase family.

It catalyses the reaction orotidine 5'-phosphate + H(+) = UMP + CO2. It functions in the pathway pyrimidine metabolism; UMP biosynthesis via de novo pathway; UMP from orotate: step 2/2. This Mycosarcoma maydis (Corn smut fungus) protein is Orotidine 5'-phosphate decarboxylase (PYR6).